A 266-amino-acid chain; its full sequence is Very-long-chain aldehyde decarbonylase GL1-11 (266 aa).

4 helical membrane passes run 25 to 45 (VVTF…SLLF), 74 to 94 (ILYH…AFKF), 106 to 126 (WTVI…IFYW), and 163 to 183 (ILFL…HLFT). The 136-residue stretch at 113–248 (VLFYFVLEDF…FVYMDWLFGT (136 aa)) folds into the Fatty acid hydroxylase domain.

Belongs to the sterol desaturase family. Homodimer.

It is found in the endoplasmic reticulum membrane. It carries out the reaction a long-chain fatty aldehyde + 2 NADPH + O2 + H(+) = a long-chain alkane + formate + 2 NADP(+) + H2O. Its function is as follows. Aldehyde decarbonylase involved in the conversion of aldehydes to alkanes. Core component of a very-long-chain alkane synthesis complex. This Oryza sativa subsp. indica (Rice) protein is Very-long-chain aldehyde decarbonylase GL1-11.